Here is a 359-residue protein sequence, read N- to C-terminus: D-alanine--D-alanine ligase (359 aa).

The ATP-grasp domain occupies 141–346 (KRIFKEAGLP…YSTLLDELIN (206 aa)). 172-227 (IEHLGYPCFVKPANLGSSVGITKVHNEEELPGALKLAAKYDRKLLIERGIDAREIE) serves as a coordination point for ATP. Mg(2+) contacts are provided by Asp299, Glu313, and Asn315.

This sequence belongs to the D-alanine--D-alanine ligase family. Requires Mg(2+) as cofactor. Mn(2+) is required as a cofactor.

The protein localises to the cytoplasm. It carries out the reaction 2 D-alanine + ATP = D-alanyl-D-alanine + ADP + phosphate + H(+). It functions in the pathway cell wall biogenesis; peptidoglycan biosynthesis. Cell wall formation. The polypeptide is D-alanine--D-alanine ligase (Thermoanaerobacter pseudethanolicus (strain ATCC 33223 / 39E) (Clostridium thermohydrosulfuricum)).